We begin with the raw amino-acid sequence, 161 residues long: Lipoprotein signal peptidase (161 aa).

A run of 3 helical transmembrane segments spans residues 4 to 24 (LLVV…WSKY), 61 to 81 (KMIF…YLLI), and 87 to 107 (SIWY…NFID). Residues Asp-116 and Asp-132 contribute to the active site. The chain crosses the membrane as a helical span at residues 127 to 147 (IFNVADSTLVVGVICIFIYLI).

Belongs to the peptidase A8 family.

The protein localises to the cell membrane. It catalyses the reaction Release of signal peptides from bacterial membrane prolipoproteins. Hydrolyzes -Xaa-Yaa-Zaa-|-(S,diacylglyceryl)Cys-, in which Xaa is hydrophobic (preferably Leu), and Yaa (Ala or Ser) and Zaa (Gly or Ala) have small, neutral side chains.. It functions in the pathway protein modification; lipoprotein biosynthesis (signal peptide cleavage). Its function is as follows. This protein specifically catalyzes the removal of signal peptides from prolipoproteins. This is Lipoprotein signal peptidase from Enterococcus faecalis (strain ATCC 700802 / V583).